A 140-amino-acid polypeptide reads, in one-letter code: Cysteine protease inhibitor 6 (140 aa).

A disulfide bridge connects residues Cys103 and Cys109.

This sequence belongs to the protease inhibitor I3 (leguminous Kunitz-type inhibitor) family.

The protein resides in the vacuole. Inhibitor of cysteine proteases. May protect the plant by inhibiting proteases of invading organisms. The sequence is that of Cysteine protease inhibitor 6 from Solanum tuberosum (Potato).